The sequence spans 78 residues: RNA-binding protein KhpA (78 aa).

The KH domain maps to threonine 29–lysine 78.

It belongs to the KhpA RNA-binding protein family.

It is found in the cytoplasm. Functionally, a probable RNA-binding protein. This chain is RNA-binding protein KhpA, found in Chlamydia caviae (strain ATCC VR-813 / DSM 19441 / 03DC25 / GPIC) (Chlamydophila caviae).